Consider the following 100-residue polypeptide: MEFTAEQLSQYNGTDESKPIYVAIKGRVFDVTTGKSFYGSGGDYSMFAGKDASRALGKMSKNEEDVSPSLEGLTEKEINTLNDWETKFEAKYPVVGRVVS.

At M1 the chain carries N-acetylmethionine. The region spanning 1-82 (MEFTAEQLSQ…LTEKEINTLN (82 aa)) is the Cytochrome b5 heme-binding domain. The tract at residues 1-82 (MEFTAEQLSQ…LTEKEINTLN (82 aa)) is sterol-binding.

It belongs to the cytochrome b5 family. MAPR subfamily.

The protein localises to the nucleus. The protein is Probable steroid-binding protein 3 (MP3) of Arabidopsis thaliana (Mouse-ear cress).